The chain runs to 535 residues: ATP-dependent RNA helicase DBP3 (535 aa).

The span at 1–21 (MSKHELKDKKRKSVDGEDVSK) shows a compositional bias: basic and acidic residues. The interval 1–82 (MSKHELKDKK…GSETAPVGDS (82 aa)) is disordered. Basic residues predominate over residues 22-33 (SKKVKKDKKDKK). Over residues 34–72 (DKKAKDGNDKVKDKKDKNKKDKSKTDKNLKEVQETEAHT) the composition is skewed to basic and acidic residues. The short motif at 125–151 (LSFSHLNLHSAIQKEISKFPKPTPIQA) is the Q motif element. The Helicase ATP-binding domain occupies 154–327 (WPYLLAGKDV…STFMRAPVKV (174 aa)). ATP is bound at residue 167–174 (AETGSGKT). The short motif at 274–277 (DEAD) is the DEAD box element. The region spanning 352-505 (KKEKRLLELL…PVPEELMKFG (154 aa)) is the Helicase C-terminal domain.

The protein belongs to the DEAD box helicase family. DDX5/DBP2 subfamily.

The protein resides in the nucleus. It is found in the nucleolus. It carries out the reaction ATP + H2O = ADP + phosphate + H(+). Its function is as follows. ATP-dependent RNA helicase required for 60S ribosomal subunit synthesis. Involved in efficient pre-rRNA processing, predominantly at site A3, which is necessary for the normal formation of 25S and 5.8S rRNAs. This is ATP-dependent RNA helicase DBP3 (DBP3) from Eremothecium gossypii (strain ATCC 10895 / CBS 109.51 / FGSC 9923 / NRRL Y-1056) (Yeast).